The sequence spans 599 residues: Adenine deaminase (599 aa).

Belongs to the metallo-dependent hydrolases superfamily. Adenine deaminase family. The cofactor is Mn(2+).

It carries out the reaction adenine + H2O + H(+) = hypoxanthine + NH4(+). This chain is Adenine deaminase, found in Clostridium botulinum (strain Loch Maree / Type A3).